A 269-amino-acid chain; its full sequence is 3-methyl-2-oxobutanoate hydroxymethyltransferase (269 aa).

Residues Asp50 and Asp89 each contribute to the Mg(2+) site. Residues 50–51 (DS), Asp89, and Lys118 each bind 3-methyl-2-oxobutanoate. Glu120 serves as a coordination point for Mg(2+). Glu187 serves as the catalytic Proton acceptor.

Belongs to the PanB family. In terms of assembly, homodecamer; pentamer of dimers. The cofactor is Mg(2+).

It localises to the cytoplasm. It carries out the reaction 3-methyl-2-oxobutanoate + (6R)-5,10-methylene-5,6,7,8-tetrahydrofolate + H2O = 2-dehydropantoate + (6S)-5,6,7,8-tetrahydrofolate. It functions in the pathway cofactor biosynthesis; (R)-pantothenate biosynthesis; (R)-pantoate from 3-methyl-2-oxobutanoate: step 1/2. Functionally, catalyzes the reversible reaction in which hydroxymethyl group from 5,10-methylenetetrahydrofolate is transferred onto alpha-ketoisovalerate to form ketopantoate. In Nitrosomonas europaea (strain ATCC 19718 / CIP 103999 / KCTC 2705 / NBRC 14298), this protein is 3-methyl-2-oxobutanoate hydroxymethyltransferase.